Here is a 155-residue protein sequence, read N- to C-terminus: Probable Brix domain-containing ribosomal biogenesis protein (155 aa).

A Brix domain is found at 1-155; it reads MLLTTSRKPS…LLIRDFRVGE (155 aa).

Probably involved in the biogenesis of the ribosome. This is Probable Brix domain-containing ribosomal biogenesis protein from Methanothermobacter thermautotrophicus (strain ATCC 29096 / DSM 1053 / JCM 10044 / NBRC 100330 / Delta H) (Methanobacterium thermoautotrophicum).